Here is a 130-residue protein sequence, read N- to C-terminus: Small ribosomal subunit protein uS8 (130 aa).

It belongs to the universal ribosomal protein uS8 family. As to quaternary structure, part of the 30S ribosomal subunit. Contacts proteins S5 and S12.

In terms of biological role, one of the primary rRNA binding proteins, it binds directly to 16S rRNA central domain where it helps coordinate assembly of the platform of the 30S subunit. This is Small ribosomal subunit protein uS8 from Phytoplasma australiense.